A 252-amino-acid polypeptide reads, in one-letter code: Chitooligosaccharide deacetylase (252 aa).

2 residues coordinate Mg(2+): His-61 and His-125.

The protein belongs to the YdjC deacetylase family. ChbG subfamily. In terms of assembly, homodimer. Mg(2+) serves as cofactor.

It localises to the cytoplasm. It catalyses the reaction N,N'-diacetylchitobiose + H2O = N-acetyl-beta-D-glucosaminyl-(1-&gt;4)-D-glucosamine + acetate. The enzyme catalyses diacetylchitobiose-6'-phosphate + H2O = N'-monoacetylchitobiose-6'-phosphate + acetate. It participates in glycan degradation; chitin degradation. Its function is as follows. Involved in the degradation of chitin. ChbG is essential for growth on the acetylated chitooligosaccharides chitobiose and chitotriose but is dispensable for growth on cellobiose and chitosan dimer, the deacetylated form of chitobiose. Deacetylation of chitobiose-6-P and chitotriose-6-P is necessary for both the activation of the chb promoter by the regulatory protein ChbR and the hydrolysis of phosphorylated beta-glucosides by the phospho-beta-glucosidase ChbF. Catalyzes the removal of only one acetyl group from chitobiose-6-P to yield monoacetylchitobiose-6-P, the inducer of ChbR and the substrate of ChbF. This Enterobacter sp. (strain 638) protein is Chitooligosaccharide deacetylase.